A 437-amino-acid polypeptide reads, in one-letter code: Arginine biosynthesis bifunctional protein ArgJ, mitochondrial (437 aa).

Substrate contacts are provided by T173, K200, T211, E297, N432, and S437. Residue T211 is the Nucleophile of the active site.

The protein belongs to the ArgJ family. Heterodimer of an alpha and a beta chain. The alpha and beta chains are autoproteolytically processed from a single precursor protein within the mitochondrion.

Its subcellular location is the mitochondrion matrix. The catalysed reaction is N(2)-acetyl-L-ornithine + L-glutamate = N-acetyl-L-glutamate + L-ornithine. It carries out the reaction L-glutamate + acetyl-CoA = N-acetyl-L-glutamate + CoA + H(+). It participates in amino-acid biosynthesis; L-arginine biosynthesis; L-ornithine and N-acetyl-L-glutamate from L-glutamate and N(2)-acetyl-L-ornithine (cyclic): step 1/1. Its pathway is amino-acid biosynthesis; L-arginine biosynthesis; N(2)-acetyl-L-ornithine from L-glutamate: step 1/4. Functionally, catalyzes two activities which are involved in the cyclic version of arginine biosynthesis: the synthesis of acetylglutamate from glutamate and acetyl-CoA, and of ornithine by transacetylation between acetylornithine and glutamate. This chain is Arginine biosynthesis bifunctional protein ArgJ, mitochondrial, found in Zygosaccharomyces rouxii (strain ATCC 2623 / CBS 732 / NBRC 1130 / NCYC 568 / NRRL Y-229).